The chain runs to 142 residues: Bacilliredoxin ABC2448 (142 aa).

Belongs to the bacilliredoxin family.

The chain is Bacilliredoxin ABC2448 from Shouchella clausii (strain KSM-K16) (Alkalihalobacillus clausii).